A 139-amino-acid polypeptide reads, in one-letter code: Large ribosomal subunit protein uL16c (139 aa).

This sequence belongs to the universal ribosomal protein uL16 family. In terms of assembly, part of the 50S ribosomal subunit.

The protein resides in the plastid. It localises to the chloroplast. This chain is Large ribosomal subunit protein uL16c, found in Cicer arietinum (Chickpea).